The sequence spans 338 residues: Probable protein S-acyltransferase 1 (338 aa).

Transmembrane regions (helical) follow at residues 32 to 52 and 68 to 88; these read DASSLLLTTCMIGGPAIAFSI and LTLIGAILLTFMAFTFLFLTS. Residues 142–192 form the DHHC domain; the sequence is KFCDTCQLYRPPRAFHCSICNNCVQRFDHHCPWVGQCIALRNYPFFVCFLS. The active-site S-palmitoyl cysteine intermediate is the cysteine 172. Transmembrane regions (helical) follow at residues 186–206 and 225–245; these read FFVCFLSCSTLLCIYVFVFSW and ILGVLGLYCFVSVWFVGGLTV. The tract at residues 319–338 is disordered; the sequence is FGPKDTKMSSGKSDSEARER. Residues 320–338 show a composition bias toward basic and acidic residues; the sequence is GPKDTKMSSGKSDSEARER.

It belongs to the DHHC palmitoyltransferase family.

It is found in the endosome membrane. The enzyme catalyses L-cysteinyl-[protein] + hexadecanoyl-CoA = S-hexadecanoyl-L-cysteinyl-[protein] + CoA. Its function is as follows. Palmitoyl acyltransferase. The protein is Probable protein S-acyltransferase 1 (PAT01) of Arabidopsis thaliana (Mouse-ear cress).